A 702-amino-acid polypeptide reads, in one-letter code: Polyribonucleotide nucleotidyltransferase (702 aa).

Mg(2+) is bound by residues aspartate 491 and aspartate 497. One can recognise a KH domain in the interval 558 to 618 (PKMKTFMIPV…TAIEKAYQLI (61 aa)). The S1 motif domain maps to 628 to 696 (GEKIIGPVVK…GKGKIKLQLI (69 aa)).

Belongs to the polyribonucleotide nucleotidyltransferase family. Mg(2+) serves as cofactor.

Its subcellular location is the cytoplasm. It carries out the reaction RNA(n+1) + phosphate = RNA(n) + a ribonucleoside 5'-diphosphate. Involved in mRNA degradation. Catalyzes the phosphorolysis of single-stranded polyribonucleotides processively in the 3'- to 5'-direction. This is Polyribonucleotide nucleotidyltransferase from Spiroplasma citri.